The chain runs to 482 residues: High affinity 3',5'-cyclic-AMP phosphodiesterase 7A (482 aa).

The residue at position 84 (serine 84) is a Phosphoserine. The region spanning 136–458 is the PDEase domain; the sequence is LDDDYNGQAK…ASWKGLQREQ (323 aa). The active-site Proton donor is the histidine 212. A divalent metal cation contacts are provided by histidine 216, histidine 252, aspartate 253, and aspartate 362.

It belongs to the cyclic nucleotide phosphodiesterase family. PDE7 subfamily. In terms of assembly, interacts with CBFA2T3. Requires a divalent metal cation as cofactor. In terms of tissue distribution, found at high levels in skeletal muscle and at low levels in a variety of tissues including brain and heart. It is expressed as well in two T-cell lines. As to expression, found abundantly in skeletal muscle and at low levels in heart.

The protein localises to the cytoplasm. It is found in the cytosol. It catalyses the reaction 3',5'-cyclic AMP + H2O = AMP + H(+). It participates in purine metabolism; 3',5'-cyclic AMP degradation; AMP from 3',5'-cyclic AMP: step 1/1. Insensitive to all selective PDE inhibitors. Functionally, hydrolyzes the second messenger cAMP, which is a key regulator of many important physiological processes. May have a role in muscle signal transduction. The chain is High affinity 3',5'-cyclic-AMP phosphodiesterase 7A from Homo sapiens (Human).